The primary structure comprises 117 residues: Large ribosomal subunit protein bL19 (117 aa).

It belongs to the bacterial ribosomal protein bL19 family.

Functionally, this protein is located at the 30S-50S ribosomal subunit interface and may play a role in the structure and function of the aminoacyl-tRNA binding site. The chain is Large ribosomal subunit protein bL19 from Shewanella woodyi (strain ATCC 51908 / MS32).